The primary structure comprises 210 residues: Thymidylate kinase (210 aa).

An ATP-binding site is contributed by 14–21 (GLDRSGKS).

Belongs to the thymidylate kinase family.

The enzyme catalyses dTMP + ATP = dTDP + ADP. The protein operates within pyrimidine metabolism; dTTP biosynthesis. In terms of biological role, catalyzes the conversion of dTMP to dTDP. This Schizosaccharomyces pombe (strain 972 / ATCC 24843) (Fission yeast) protein is Thymidylate kinase (tmp1).